Consider the following 798-residue polypeptide: Integrin beta-5 (798 aa).

Positions 1–23 are cleaved as a signal peptide; the sequence is MPRVPATLYACLLGLCALVPRLA. Residues 24–719 lie on the Extracellular side of the membrane; the sequence is GLNICTSGSA…REPECGSAPN (696 aa). The PSI domain maps to 27-76; that stretch reads ICTSGSATSCEECLLIHPKCAWCSKEYFGNPRSITSRCDLKANLIRNGCE. Intrachain disulfides connect Cys-28/Cys-46, Cys-36/Cys-463, Cys-39/Cys-64, Cys-49/Cys-75, Cys-202/Cys-211, Cys-259/Cys-300, Cys-401/Cys-413, Cys-433/Cys-461, Cys-465/Cys-484, Cys-476/Cys-487, Cys-489/Cys-498, Cys-500/Cys-530, Cys-513/Cys-528, Cys-522/Cys-533, Cys-535/Cys-548, Cys-550/Cys-571, Cys-555/Cys-569, Cys-563/Cys-574, and Cys-576/Cys-585. The VWFA domain maps to 136–378; sequence YPVDLYYLMD…QLIINAYSSI (243 aa). 2 residues coordinate Mg(2+): Ser-147 and Ser-149. Ca(2+)-binding residues include Ser-149, Asp-152, Asp-153, and Asp-184. Positions 242, 244, 246, and 247 each coordinate Ca(2+). Glu-247 is a binding site for Mg(2+). The N-linked (GlcNAc...) asparagine glycan is linked to Asn-347. Ca(2+) is bound at residue Gly-362. Asn-460 and Asn-479 each carry an N-linked (GlcNAc...) asparagine glycan. 4 consecutive I-EGF domains span residues 465–499, 500–549, 550–586, and 587–626; these read CSTGLEPNSARCSGNGTYTCGLCECDPGYLGTRCE, CQEG…PFCE, CDSFSCARNKGVLCSGHGECHCGECKCHAGYIGDNCN, and CSTDVSTCKAKDGQICSDRGRCVCGQCQCTEPGAFGETCE. N-linked (GlcNAc...) asparagine glycosylation is present at Asn-505. N-linked (GlcNAc...) asparagine glycosylation occurs at Asn-586. Cystine bridges form between Cys-587/Cys-610, Cys-594/Cys-608, Cys-602/Cys-613, Cys-615/Cys-625, Cys-628/Cys-631, Cys-635/Cys-682, Cys-641/Cys-661, Cys-644/Cys-657, and Cys-690/Cys-714. N-linked (GlcNAc...) asparagine glycans are attached at residues Asn-654 and Asn-705. The helical transmembrane segment at 720–742 threads the bilayer; sequence AMTILLAVVGSILLIGMALLAIW. Residues 743 to 798 lie on the Cytoplasmic side of the membrane; it reads KLLVTIHDRREFAKFQSERSRARYEMASNPLYRKPISTHTVDFAFNKFNKSYNGSV. Ser-770 is subject to Phosphoserine.

Belongs to the integrin beta chain family. Heterodimer of an alpha and a beta subunit. Beta-5 (ITGB5) associates with alpha-V (ITGAV). Interacts with MYO10. Interacts with DAB2. Integrin ITGAV:ITGB5 interacts with FBLN5 (via N-terminus). ITGAV:ITGB5 interacts with CCN3. Interacts with tensin TNS3; TNS3 also interacts with PEAK1, thus acting as an adapter molecule to bridge the association of PEAK1 with ITGB5.

The protein resides in the cell membrane. Integrin alpha-V/beta-5 (ITGAV:ITGB5) is a receptor for fibronectin. It recognizes the sequence R-G-D in its ligand. The chain is Integrin beta-5 (Itgb5) from Mus musculus (Mouse).